We begin with the raw amino-acid sequence, 224 residues long: Metalloproteinase inhibitor 4 (224 aa).

Residues 1 to 29 (MPGSPRPAPSWVLLLRLLALLRPPGLGEA) form the signal peptide. Zn(2+) is bound at residue Cys30. Involved in metalloproteinase-binding regions lie at residues 30-33 (CSCA) and 99-100 (SS). Intrachain disulfides connect Cys30-Cys102, Cys32-Cys131, Cys42-Cys156, Cys158-Cys205, Cys163-Cys168, and Cys176-Cys197. In terms of domain architecture, NTR spans 30–156 (CSCAPAHPQQ…SLNHHYHLNC (127 aa)).

Belongs to the protease inhibitor I35 (TIMP) family. Abundant in heart and present at low levels in many other tissues.

The protein localises to the secreted. In terms of biological role, complexes with metalloproteinases (such as collagenases) and irreversibly inactivates them by binding to their catalytic zinc cofactor. Known to act on MMP-1, MMP-2, MMP-3, MMP-7 and MMP-9. The chain is Metalloproteinase inhibitor 4 (TIMP4) from Homo sapiens (Human).